A 289-amino-acid chain; its full sequence is Sphingomyelinase D (289 aa).

A signal peptide spans 1–22 (MQSISVLICVLLALSILNFTVA). His34 is an active-site residue. Glu54, Asp56, and Asp103 together coordinate Mg(2+). The SMD-tail motif lies at 282–289 (ATEDDAPW).

Belongs to the sphingomyelinase D/phospholipase D family. Mg(2+) serves as cofactor.

The protein resides in the secreted. The enzyme catalyses a sphingomyelin + H2O = an N-acylsphing-4-enine 1-phosphate + choline + H(+). Sphingomyelinase activity is reduced by 33 percent following addition of EDTA. Catalyzes the hydrolysis of sphingomyelin. Sphingomyelinases D are produced by some spider in their venoms, but also by arthropods such as ticks, or pathogenic bacteria and fungi. They might play a role in pathogenicity through different mechanisms, such as membrane destabilization and host cell penetration, but also pulmonary inflammation and cutaneous lesions. The sequence is that of Sphingomyelinase D from Aspergillus flavus (strain ATCC 200026 / FGSC A1120 / IAM 13836 / NRRL 3357 / JCM 12722 / SRRC 167).